We begin with the raw amino-acid sequence, 104 residues long: ATP-dependent Clp protease adapter protein ClpS (104 aa).

The segment at 1-20 (MAEETPTRSPGGAAVLDKAP) is disordered.

This sequence belongs to the ClpS family. In terms of assembly, binds to the N-terminal domain of the chaperone ClpA.

Its function is as follows. Involved in the modulation of the specificity of the ClpAP-mediated ATP-dependent protein degradation. In Synechococcus sp. (strain CC9902), this protein is ATP-dependent Clp protease adapter protein ClpS.